Consider the following 265-residue polypeptide: Glutamate racemase (265 aa).

Substrate contacts are provided by residues Asp9 to Ser10 and Tyr41 to Gly42. Catalysis depends on Cys72, which acts as the Proton donor/acceptor. Position 73–74 (Asn73–Thr74) interacts with substrate. Cys183 (proton donor/acceptor) is an active-site residue. Thr184–His185 is a binding site for substrate.

It belongs to the aspartate/glutamate racemases family.

It catalyses the reaction L-glutamate = D-glutamate. Its pathway is cell wall biogenesis; peptidoglycan biosynthesis. Its function is as follows. Provides the (R)-glutamate required for cell wall biosynthesis. The chain is Glutamate racemase from Lysinibacillus sphaericus (Bacillus sphaericus).